A 157-amino-acid chain; its full sequence is MMKFKKVVVGGTFDRLHLGHKALLRKAFEVGKIVYIGLTSDDMVKNKPYAEKILPYERRLKDLIEFLEVNNFRRYRIIKINNAIGFTTRIRSLEAIVVSEETYKGALLVNRAREEVGLRPLEIIVIPIIKSKLGDKISSSLIRAGLIDPFGNPIKRE.

Belongs to the eukaryotic CoaD family. In terms of assembly, monomer.

It is found in the cytoplasm. The enzyme catalyses (R)-4'-phosphopantetheine + ATP + H(+) = 3'-dephospho-CoA + diphosphate. The protein operates within cofactor biosynthesis; coenzyme A biosynthesis. Reversibly transfers an adenylyl group from ATP to 4'-phosphopantetheine, yielding dephospho-CoA (dPCoA) and pyrophosphate. This Pyrococcus abyssi (strain GE5 / Orsay) protein is Phosphopantetheine adenylyltransferase.